The following is a 239-amino-acid chain: Fatty acid metabolism regulator protein (239 aa).

In terms of domain architecture, HTH gntR-type spans 6-74; it reads KGPASFAEKY…HGKPTQVNNF (69 aa). Positions 34–53 form a DNA-binding region, H-T-H motif; sequence ERELSELIGVTRTTLREVLQ.

Homodimer.

It is found in the cytoplasm. Its function is as follows. Multifunctional regulator of fatty acid metabolism. The chain is Fatty acid metabolism regulator protein from Shewanella frigidimarina (strain NCIMB 400).